Here is a 188-residue protein sequence, read N- to C-terminus: NADH-quinone oxidoreductase subunit I (188 aa).

4Fe-4S ferredoxin-type domains are found at residues 44–74 (LNRY…VEGA) and 90–119 (QVYQ…MTNE). [4Fe-4S] cluster-binding residues include Cys-54, Cys-57, Cys-60, Cys-64, Cys-99, Cys-102, Cys-105, and Cys-109. The tract at residues 167-188 (TGGAAAAAQDESEVDDTAGDRP) is disordered. The segment covering 176–188 (DESEVDDTAGDRP) has biased composition (acidic residues).

It belongs to the complex I 23 kDa subunit family. NDH-1 is composed of 14 different subunits. Subunits NuoA, H, J, K, L, M, N constitute the membrane sector of the complex. [4Fe-4S] cluster serves as cofactor.

The protein resides in the cell membrane. The enzyme catalyses a quinone + NADH + 5 H(+)(in) = a quinol + NAD(+) + 4 H(+)(out). Its function is as follows. NDH-1 shuttles electrons from NADH, via FMN and iron-sulfur (Fe-S) centers, to quinones in the respiratory chain. The immediate electron acceptor for the enzyme in this species is believed to be ubiquinone. Couples the redox reaction to proton translocation (for every two electrons transferred, four hydrogen ions are translocated across the cytoplasmic membrane), and thus conserves the redox energy in a proton gradient. The protein is NADH-quinone oxidoreductase subunit I of Rhodococcus jostii (strain RHA1).